We begin with the raw amino-acid sequence, 225 residues long: Orotidine 5'-phosphate decarboxylase (225 aa).

Residues D9, K31, 58–67 (DLKLHDIPNT), T115, R176, Q184, G204, and R205 each bind substrate. Residue K60 is the Proton donor of the active site.

The protein belongs to the OMP decarboxylase family. Type 1 subfamily. As to quaternary structure, homodimer.

The enzyme catalyses orotidine 5'-phosphate + H(+) = UMP + CO2. It functions in the pathway pyrimidine metabolism; UMP biosynthesis via de novo pathway; UMP from orotate: step 2/2. Its function is as follows. Catalyzes the decarboxylation of orotidine 5'-monophosphate (OMP) to uridine 5'-monophosphate (UMP). In Wolbachia sp. subsp. Brugia malayi (strain TRS), this protein is Orotidine 5'-phosphate decarboxylase.